Consider the following 261-residue polypeptide: Glutamate racemase (261 aa).

Residues 7-8 (DS) and 39-40 (YG) contribute to the substrate site. Residue Cys71 is the Proton donor/acceptor of the active site. Position 72-73 (72-73 (NT)) interacts with substrate. Cys184 functions as the Proton donor/acceptor in the catalytic mechanism. 185-186 (TH) provides a ligand contact to substrate.

The protein belongs to the aspartate/glutamate racemases family.

It catalyses the reaction L-glutamate = D-glutamate. Its pathway is cell wall biogenesis; peptidoglycan biosynthesis. Provides the (R)-glutamate required for cell wall biosynthesis. The protein is Glutamate racemase of Aliarcobacter butzleri (strain RM4018) (Arcobacter butzleri).